Consider the following 268-residue polypeptide: Nickel import ATP-binding protein NikE (268 aa).

In terms of domain architecture, ABC transporter spans 4-252; sequence LNVSGLSHHY…SSDAGRVLQN (249 aa). 45–52 serves as a coordination point for ATP; the sequence is GRSGCGKS.

Belongs to the ABC transporter superfamily. Nickel importer (TC 3.A.1.5.3) family. As to quaternary structure, the complex is composed of two ATP-binding proteins (NikD and NikE), two transmembrane proteins (NikB and NikC) and a solute-binding protein (NikA).

It is found in the cell inner membrane. The catalysed reaction is Ni(2+)(out) + ATP + H2O = Ni(2+)(in) + ADP + phosphate + H(+). Its function is as follows. Part of the ABC transporter complex NikABCDE involved in nickel import. Responsible for energy coupling to the transport system. The chain is Nickel import ATP-binding protein NikE from Shigella boydii serotype 4 (strain Sb227).